A 300-amino-acid chain; its full sequence is Ribosomal protein L11 methyltransferase (300 aa).

Thr-152, Gly-173, Asp-195, and Asn-234 together coordinate S-adenosyl-L-methionine.

It belongs to the methyltransferase superfamily. PrmA family.

Its subcellular location is the cytoplasm. It catalyses the reaction L-lysyl-[protein] + 3 S-adenosyl-L-methionine = N(6),N(6),N(6)-trimethyl-L-lysyl-[protein] + 3 S-adenosyl-L-homocysteine + 3 H(+). Its function is as follows. Methylates ribosomal protein L11. In Burkholderia lata (strain ATCC 17760 / DSM 23089 / LMG 22485 / NCIMB 9086 / R18194 / 383), this protein is Ribosomal protein L11 methyltransferase.